A 150-amino-acid chain; its full sequence is MIPGEILPGEDPVEINPGRPVRTVLVRNTGDRPVQVGSHYHFAAANPALDFDRDLAWGHRLAVPAGTAVRFEPGVEREVDLVPLTGARIVPGLRPESAGPLDGRAVRAGGAVRAGGAVRAGGAVVGDSPAATPGTTGATGDLPGYLGEGS.

A compositionally biased stretch (low complexity) spans 122–140 (GAVVGDSPAATPGTTGATG). The disordered stretch occupies residues 122–150 (GAVVGDSPAATPGTTGATGDLPGYLGEGS).

The protein belongs to the urease beta subunit family. In terms of assembly, heterotrimer of UreA (gamma), UreB (beta) and UreC (alpha) subunits. Three heterotrimers associate to form the active enzyme.

It is found in the cytoplasm. It catalyses the reaction urea + 2 H2O + H(+) = hydrogencarbonate + 2 NH4(+). It functions in the pathway nitrogen metabolism; urea degradation; CO(2) and NH(3) from urea (urease route): step 1/1. In Frankia alni (strain DSM 45986 / CECT 9034 / ACN14a), this protein is Urease subunit beta.